Consider the following 571-residue polypeptide: Glycine--tRNA ligase (571 aa).

2 residues coordinate substrate: Arg99 and Glu165. ATP contacts are provided by residues 197–199 (RNE), 207–212 (IRLREF), 324–325 (EC), and 443–446 (GIDR). 212 to 216 (FTQAE) contacts substrate. 439 to 443 (EPSFG) contributes to the substrate binding site.

It belongs to the class-II aminoacyl-tRNA synthetase family.

It localises to the cytoplasm. It carries out the reaction tRNA(Gly) + glycine + ATP = glycyl-tRNA(Gly) + AMP + diphosphate. Functionally, catalyzes the attachment of glycine to tRNA(Gly). This Pyrococcus abyssi (strain GE5 / Orsay) protein is Glycine--tRNA ligase.